The sequence spans 473 residues: Cysteine--tRNA ligase (473 aa).

Residue Cys-33 participates in Zn(2+) binding. A 'HIGH' region motif is present at residues Ala-35 to His-45. 3 residues coordinate Zn(2+): Cys-211, His-236, and Glu-240. Residues Lys-267–Ser-271 carry the 'KMSKS' region motif. Residue Lys-270 coordinates ATP.

This sequence belongs to the class-I aminoacyl-tRNA synthetase family. As to quaternary structure, monomer. Zn(2+) serves as cofactor.

Its subcellular location is the cytoplasm. The catalysed reaction is tRNA(Cys) + L-cysteine + ATP = L-cysteinyl-tRNA(Cys) + AMP + diphosphate. The chain is Cysteine--tRNA ligase from Mycobacterium leprae (strain Br4923).